We begin with the raw amino-acid sequence, 1148 residues long: MSVPDYMQCAEDHQTLLVVVQAVGIVSEENFFRIYKRICSVSQLSVRDTQRALFIRYRHHYPPENNEWGDFQTHRKVVGLITITDCFSPKDWPQTFEKFHVQKEIYGSTLYDSRLFVFGLQGDVAEQPRPDVAFYPNYDDCDSVEKRIEDFIESLFIVLESKRLDRATDKSGDKIPLLCVPFEKKDFVGLDTDSRHYKKRCQGRMRKHVGDLCLQAGMLQDALVHYHMSVELLRSVNDFLWLGAALEGLCSASVIYHYPGGTGGKTGARRLQGSSLPSEAANRHRPGAQEVLIDPGALTTNGINPDTSTEIGRAKNCLSPEDIIDKYKEAISYYSKYKNAGVIELEACVKAVRVLAIQKRGMEASEFLQNAVYINLRQLSEEEKIQRYSILSELYELIGFHRKSAFFKRVAAMQCVAPSIAEPGWRACYKLLLETLPGYSLSLDPKDFSKGTHRGWAAVQMRLLHELVYASRRMGNPALSVRHLSFLLQTMLDFLSDQEKKDVTQSLENYTAKCPGTMEPITLPDGLTLPPVPFTKLPIVRCVKLLSLPTSLRPHKVKSLLGQSMSTKSPFIYSPIIAHNRGEERNKKIDFQWVQGDVCEVQLMVYNPMPFELRVENMGLLTSGVEFESLPAALSLPAESGLYPVTLVGVPQTTGMITVNGYHTTVFGVFSDCLLDNLPGLKTGGSTVEVIPALPRLQISTSLPRSARSLQPSAGDEIATNVSVQLYNGETQQLAVTLENIGLEPLEQLEVTSKLLTTKEKLYGDFLSWKLEETLAQFPLQPGKVATFTINIKAKLDFSCQENLLQDLSDDGISVSGFPLSSPFRQVVRPRVESRPTNPSEGSKTGDLGHVKTLEAVLNFKYSGGPGHVEGYYRNLSLGLHVEVEPSVFFTRVSTLPATSTRQCHLLLDVFNSTEHELTVCARNNSELVLHASECQRMAIQVDKFNFESVPESPGEKGHFANLKQLEEERQEARGLEISSKLDIRWRIPSLKRSGEASVEGLLNQLILEHLQLAPLQWDVLVDGQPCDCEVAAACQVGDPVRLEVRLTNRSPRSVGPFALTVVPFQDHQNGVHNYDLHDVISFVGSSTFYLDTVQPSGQSTCLGALLFLYTGDFFLNIRFHEDCKSKELPPSWVCLPSVHVRALGAQA.

Ser-566 and Ser-953 each carry phosphoserine.

Belongs to the NIBP family. Component of the multisubunit TRAPP (transport protein particle) complex, which includes at least TRAPPC2, TRAPPC2L, TRAPPC3, TRAPPC3L, TRAPPC4, TRAPPC5, TRAPPC8, TRAPPC9, TRAPPC10, TRAPPC11 and TRAPPC12. Directly interacts with IKBKB and MAP3K14. As to expression, expressed in neurons of the pyramidal layer of the cortex, in spinal cord motor neurons and white matter neurons (at protein level).

The protein resides in the golgi apparatus. It is found in the cis-Golgi network. Its subcellular location is the endoplasmic reticulum. It localises to the cytoplasm. Functions as an activator of NF-kappa-B through increased phosphorylation of the IKK complex. May function in neuronal cells differentiation. May play a role in vesicular transport from endoplasmic reticulum to Golgi. The protein is Trafficking protein particle complex subunit 9 (Trappc9) of Mus musculus (Mouse).